A 480-amino-acid polypeptide reads, in one-letter code: Chromosomal replication initiator protein DnaA (480 aa).

Positions 1 to 71 are domain I, interacts with DnaA modulators; sequence MRHDALFERV…TTLVQQEDSE (71 aa). A domain II region spans residues 71–137; the sequence is EILKVEILVR…RPVQAPLFGS (67 aa). The segment at 138 to 360 is domain III, AAA+ region; it reads PLDQRYGFDS…GAFNQLLFRR (223 aa). Residues Gly184, Gly186, Lys187, and Thr188 each contribute to the ATP site. Residues 361–480 are domain IV, binds dsDNA; sequence SFEPQLSIER…IELLKRLINE (120 aa).

This sequence belongs to the DnaA family. Oligomerizes as a right-handed, spiral filament on DNA at oriC.

Its subcellular location is the cytoplasm. In terms of biological role, plays an essential role in the initiation and regulation of chromosomal replication. ATP-DnaA binds to the origin of replication (oriC) to initiate formation of the DNA replication initiation complex once per cell cycle. Binds the DnaA box (a 9 base pair repeat at the origin) and separates the double-stranded (ds)DNA. Forms a right-handed helical filament on oriC DNA; dsDNA binds to the exterior of the filament while single-stranded (ss)DNA is stabiized in the filament's interior. The ATP-DnaA-oriC complex binds and stabilizes one strand of the AT-rich DNA unwinding element (DUE), permitting loading of DNA polymerase. After initiation quickly degrades to an ADP-DnaA complex that is not apt for DNA replication. Binds acidic phospholipids. This Rhizobium meliloti (strain 1021) (Ensifer meliloti) protein is Chromosomal replication initiator protein DnaA.